Reading from the N-terminus, the 229-residue chain is Uracil-DNA glycosylase (229 aa).

Aspartate 72 (proton acceptor) is an active-site residue.

The protein belongs to the uracil-DNA glycosylase (UDG) superfamily. UNG family.

It localises to the cytoplasm. It carries out the reaction Hydrolyzes single-stranded DNA or mismatched double-stranded DNA and polynucleotides, releasing free uracil.. Excises uracil residues from the DNA which can arise as a result of misincorporation of dUMP residues by DNA polymerase or due to deamination of cytosine. This Dichelobacter nodosus (strain VCS1703A) protein is Uracil-DNA glycosylase.